The following is a 676-amino-acid chain: UvrABC system protein B (676 aa).

The region spanning E26–V414 is the Helicase ATP-binding domain. G39–T46 is a binding site for ATP. Residues Y92 to V115 carry the Beta-hairpin motif. The region spanning Q432–M598 is the Helicase C-terminal domain. Residues E636–Q671 form the UVR domain.

This sequence belongs to the UvrB family. In terms of assembly, forms a heterotetramer with UvrA during the search for lesions. Interacts with UvrC in an incision complex.

The protein resides in the cytoplasm. The UvrABC repair system catalyzes the recognition and processing of DNA lesions. A damage recognition complex composed of 2 UvrA and 2 UvrB subunits scans DNA for abnormalities. Upon binding of the UvrA(2)B(2) complex to a putative damaged site, the DNA wraps around one UvrB monomer. DNA wrap is dependent on ATP binding by UvrB and probably causes local melting of the DNA helix, facilitating insertion of UvrB beta-hairpin between the DNA strands. Then UvrB probes one DNA strand for the presence of a lesion. If a lesion is found the UvrA subunits dissociate and the UvrB-DNA preincision complex is formed. This complex is subsequently bound by UvrC and the second UvrB is released. If no lesion is found, the DNA wraps around the other UvrB subunit that will check the other stand for damage. This chain is UvrABC system protein B, found in Vibrio parahaemolyticus serotype O3:K6 (strain RIMD 2210633).